Reading from the N-terminus, the 803-residue chain is H(+)/Cl(-) exchange transporter 7 (803 aa).

The segment at M1 to Q46 is disordered. The Cytoplasmic segment spans residues M1 to R124. S9 carries the post-translational modification Phosphoserine. A run of 2 helical transmembrane segments spans residues W125–I157 and F172–I195. Positions G201–P205 match the Selectivity filter part_1 motif. Residue S202 participates in chloride binding. Residues I204 to L211 constitute an intramembrane region (helical). Helical transmembrane passes span R221–G239 and E245–G262. A Selectivity filter part_2 motif is present at residues G243–P247. Intramembrane regions (helical) lie at residues F286–A298 and P302–L310. The next 5 helical transmembrane spans lie at F320–V339, I373–R403, P408–I430, P485–L505, and G510–L533. Positions G510–P514 match the Selectivity filter part_3 motif. F512 contributes to the chloride binding site. Positions G543 to I557 form an intramembrane region, helical. The note=Loop between two helices intramembrane region spans V558–M560. Positions T561–T572 form an intramembrane region, helical. Positions S573–T576 form an intramembrane region, note=Loop between two helices. A helical transmembrane segment spans residues Y577–F595. The Cytoplasmic segment spans residues I596–T803. Y600 provides a ligand contact to chloride. 2 consecutive CBS domains span residues M629–E693 and M739–E797. ATP contacts are provided by residues H656–G658 and T781–D784. Position 799 is a phosphoserine (S799).

This sequence belongs to the chloride channel (TC 2.A.49) family. ClC-7/CLCN7 subfamily. As to quaternary structure, chloride channel 7 are heteromers of alpha (CLCN7) and beta (OSTM1) subunits. Liver, spleen, kidneys and brain.

The protein resides in the lysosome membrane. The catalysed reaction is 2 chloride(in) + H(+)(out) = 2 chloride(out) + H(+)(in). Functionally, slowly voltage-gated channel mediating the exchange of chloride ions against protons. Functions as antiporter and contributes to the acidification of the lysosome lumen and may be involved in maintaining lysosomal pH. The CLC channel family contains both chloride channels and proton-coupled anion transporters that exchange chloride or another anion for protons. The presence of conserved gating glutamate residues is typical for family members that function as antiporters. This is H(+)/Cl(-) exchange transporter 7 from Mus musculus (Mouse).